Here is a 176-residue protein sequence, read N- to C-terminus: NAD(P)H-quinone oxidoreductase subunit 6, chloroplastic (176 aa).

A run of 5 helical transmembrane segments spans residues 10-30, 32-52, 61-81, 105-125, and 153-173; these read FLLV…VLFP, PIYS…FYIL, AQLL…VMFL, ISLF…GIIW, and FLPF…AIVI.

The protein belongs to the complex I subunit 6 family. In terms of assembly, NDH is composed of at least 16 different subunits, 5 of which are encoded in the nucleus.

The protein localises to the plastid. It localises to the chloroplast thylakoid membrane. It catalyses the reaction a plastoquinone + NADH + (n+1) H(+)(in) = a plastoquinol + NAD(+) + n H(+)(out). It carries out the reaction a plastoquinone + NADPH + (n+1) H(+)(in) = a plastoquinol + NADP(+) + n H(+)(out). Functionally, NDH shuttles electrons from NAD(P)H:plastoquinone, via FMN and iron-sulfur (Fe-S) centers, to quinones in the photosynthetic chain and possibly in a chloroplast respiratory chain. The immediate electron acceptor for the enzyme in this species is believed to be plastoquinone. Couples the redox reaction to proton translocation, and thus conserves the redox energy in a proton gradient. The chain is NAD(P)H-quinone oxidoreductase subunit 6, chloroplastic (ndhG) from Ipomoea purpurea (Common morning glory).